Here is a 54-residue protein sequence, read N- to C-terminus: Ferredoxin (54 aa).

2 consecutive 4Fe-4S ferredoxin-type domains span residues 2–25 and 26–54; these read YVIN…IQQG and SIYA…NPED. 8 residues coordinate [4Fe-4S] cluster: Cys8, Cys11, Cys14, Cys18, Cys35, Cys38, Cys41, and Cys45.

[4Fe-4S] cluster serves as cofactor.

Functionally, ferredoxins are iron-sulfur proteins that transfer electrons in a wide variety of metabolic reactions. The polypeptide is Ferredoxin (Peptoniphilus asaccharolyticus (Peptostreptococcus asaccharolyticus)).